The chain runs to 185 residues: Ribosome-recycling factor (185 aa).

It belongs to the RRF family.

The protein resides in the cytoplasm. In terms of biological role, responsible for the release of ribosomes from messenger RNA at the termination of protein biosynthesis. May increase the efficiency of translation by recycling ribosomes from one round of translation to another. This chain is Ribosome-recycling factor, found in Hahella chejuensis (strain KCTC 2396).